The following is a 306-amino-acid chain: uncharacterized protein (306 aa).

The tract at residues 287 to 306 (DEEGKSEDAKRQEEEKKKSS) is disordered.

It belongs to the aldo/keto reductase family.

The protein resides in the cytoplasm. It is found in the nucleus. This is an uncharacterized protein from Schizosaccharomyces pombe (strain 972 / ATCC 24843) (Fission yeast).